Consider the following 819-residue polypeptide: Lon protease (819 aa).

The disordered stretch occupies residues 1-36 (MDSTTNSDSPILDPNPEDVEKLLDESEEESEDQSTE). Residues 43-240 (LFILPLNKRP…KALILLKKEL (198 aa)) form the Lon N-terminal domain. 393 to 400 (GPPGVGKT) lines the ATP pocket. One can recognise a Lon proteolytic domain in the interval 635 to 817 (STPVGVATGL…DDVLKVAFPK (183 aa)). Residues Ser723 and Lys766 contribute to the active site.

This sequence belongs to the peptidase S16 family. As to quaternary structure, homohexamer. Organized in a ring with a central cavity.

The protein resides in the cytoplasm. The enzyme catalyses Hydrolysis of proteins in presence of ATP.. Its function is as follows. ATP-dependent serine protease that mediates the selective degradation of mutant and abnormal proteins as well as certain short-lived regulatory proteins. Required for cellular homeostasis and for survival from DNA damage and developmental changes induced by stress. Degrades polypeptides processively to yield small peptide fragments that are 5 to 10 amino acids long. Binds to DNA in a double-stranded, site-specific manner. This is Lon protease from Chlamydia pneumoniae (Chlamydophila pneumoniae).